The chain runs to 517 residues: 3-hydroxyphenylacetate 6-hydroxylase (517 aa).

Cys449 contributes to the heme binding site.

It belongs to the cytochrome P450 family.

It catalyses the reaction 3-hydroxyphenylacetate + NADH + O2 + H(+) = homogentisate + NAD(+) + H2O. The enzyme catalyses 3-hydroxyphenylacetate + NADPH + O2 + H(+) = homogentisate + NADP(+) + H2O. It carries out the reaction 3,4-dihydroxyphenylacetate + NADH + O2 + H(+) = 2,4,5-trihydroxyphenylacetate + NAD(+) + H2O. The catalysed reaction is 3,4-dihydroxyphenylacetate + NADPH + O2 + H(+) = 2,4,5-trihydroxyphenylacetate + NADP(+) + H2O. Its pathway is aromatic compound metabolism; phenylacetate degradation. Catalyzes the hydroxylation of 3-hydroxyphenylacetate and 3,4-dihydroxyphenylacetate to 2,5-dihydroxyphenylacetate (homogentisate) and 2,4,5-trihydroxyphenylacetate, respectively. Both of these compounds are used as substrate by homogentisate dioxygenase in the homogentisate pathway. The homogentisate pathway is used to catabolize phenylacetate and use it as a carbon source. Can also catalyze the hydroxylation of phenylacetate to 2-hydroxyphenylacetate at low efficiency to compensate for loss of phacA. This chain is 3-hydroxyphenylacetate 6-hydroxylase (phacB), found in Emericella nidulans (Aspergillus nidulans).